We begin with the raw amino-acid sequence, 183 residues long: Copper transporter 4 (183 aa).

The tract at residues 1-21 (MAMPMPMPPPGPGGDAPPAPT) is disordered. 2 helical membrane passes run 56–76 (VGMY…AEAL) and 115–135 (LAYL…LAAV).

This sequence belongs to the copper transporter (Ctr) (TC 1.A.56) family. SLC31A subfamily.

It localises to the membrane. Its function is as follows. Involved in the transport of copper. This Oryza sativa subsp. japonica (Rice) protein is Copper transporter 4 (COPT4).